A 300-amino-acid polypeptide reads, in one-letter code: MPLSMNREVFITCAVTGAGDTVSKSSHVPVTPKQIAESAIEAAKAGAAVVHCHVRDPETGAPARRLDLYREVTDRIRSADIDVVLNLTAGMGGDLVFGNVESPFPVDEKGTDMAGATERVAHVAECLPEICTLDCGTMNFSLGDYVMTNTPSMLREMARQMTALGVRPEIEAFDTGHLWFAKQLAEEGLIEDPVLIQLCMGIPWGAPDDLNTFMAMVNNVPSNWTFSAFSIGRNAMAYPAAAVLAGGNVRVGLEDNLYVGKGQLATNAQLVEKAVSVVESMGAKIIGPEEVRRKLKLTKR.

The Zn(2+) site is built by histidine 51, histidine 53, and glutamate 254.

Belongs to the BKACE family. In terms of assembly, homotetramer. Zn(2+) is required as a cofactor.

The enzyme catalyses 3-dehydrocarnitine + acetyl-CoA = N,N,N-trimethylglycyl-CoA + acetoacetate. It functions in the pathway amine and polyamine metabolism; carnitine metabolism. In terms of biological role, catalyzes the condensation of dehydrocarnitine and acetyl-CoA, forming acetoacetate and betainyl-CoA (N,N,N-trimethylglycyl-CoA). Is involved in a L-carnitine degradation pathway that allows R.meliloti to grow on L-carnitine as the sole source of carbon and nitrogen. This chain is 3-dehydrocarnitine:acetyl-CoA trimethylamine transferase, found in Rhizobium meliloti (strain 1021) (Ensifer meliloti).